A 252-amino-acid chain; its full sequence is 3-dehydroquinate dehydratase (252 aa).

Residues Ser-21, 46-48 (EWR), and Arg-82 contribute to the 3-dehydroquinate site. His-143 functions as the Proton donor/acceptor in the catalytic mechanism. Lys-170 (schiff-base intermediate with substrate) is an active-site residue. Residues Arg-213, Ser-232, and Gln-236 each coordinate 3-dehydroquinate.

The protein belongs to the type-I 3-dehydroquinase family. In terms of assembly, homodimer.

The enzyme catalyses 3-dehydroquinate = 3-dehydroshikimate + H2O. Its pathway is metabolic intermediate biosynthesis; chorismate biosynthesis; chorismate from D-erythrose 4-phosphate and phosphoenolpyruvate: step 3/7. Involved in the third step of the chorismate pathway, which leads to the biosynthesis of aromatic amino acids. Catalyzes the cis-dehydration of 3-dehydroquinate (DHQ) and introduces the first double bond of the aromatic ring to yield 3-dehydroshikimate. The protein is 3-dehydroquinate dehydratase of Escherichia coli O7:K1 (strain IAI39 / ExPEC).